Consider the following 633-residue polypeptide: Threonine--tRNA ligase (633 aa).

The TGS domain maps to 1–59 (MIRITFSAEQKVKEYSGKVTGFDILQPDVLKEAIAFKVNGELHDLSREIEADAEIEVIQ). The segment at 240-532 (DHRKIAKDMD…LIENYAGKFP (293 aa)) is catalytic. 3 residues coordinate Zn(2+): Cys332, His383, and His509.

Belongs to the class-II aminoacyl-tRNA synthetase family. In terms of assembly, homodimer. The cofactor is Zn(2+).

The protein localises to the cytoplasm. The catalysed reaction is tRNA(Thr) + L-threonine + ATP = L-threonyl-tRNA(Thr) + AMP + diphosphate + H(+). In terms of biological role, catalyzes the attachment of threonine to tRNA(Thr) in a two-step reaction: L-threonine is first activated by ATP to form Thr-AMP and then transferred to the acceptor end of tRNA(Thr). Also edits incorrectly charged L-seryl-tRNA(Thr). The chain is Threonine--tRNA ligase from Wolbachia sp. subsp. Drosophila simulans (strain wRi).